Here is a 142-residue protein sequence, read N- to C-terminus: Holo-[acyl-carrier-protein] synthase (142 aa).

Positions 8 and 57 each coordinate Mg(2+).

It belongs to the P-Pant transferase superfamily. AcpS family. It depends on Mg(2+) as a cofactor.

It is found in the cytoplasm. It catalyses the reaction apo-[ACP] + CoA = holo-[ACP] + adenosine 3',5'-bisphosphate + H(+). In terms of biological role, transfers the 4'-phosphopantetheine moiety from coenzyme A to a Ser of acyl-carrier-protein. The polypeptide is Holo-[acyl-carrier-protein] synthase (Ruegeria sp. (strain TM1040) (Silicibacter sp.)).